A 573-amino-acid chain; its full sequence is Proline--tRNA ligase (573 aa).

Belongs to the class-II aminoacyl-tRNA synthetase family. ProS type 1 subfamily. As to quaternary structure, homodimer.

Its subcellular location is the cytoplasm. The catalysed reaction is tRNA(Pro) + L-proline + ATP = L-prolyl-tRNA(Pro) + AMP + diphosphate. Catalyzes the attachment of proline to tRNA(Pro) in a two-step reaction: proline is first activated by ATP to form Pro-AMP and then transferred to the acceptor end of tRNA(Pro). As ProRS can inadvertently accommodate and process non-cognate amino acids such as alanine and cysteine, to avoid such errors it has two additional distinct editing activities against alanine. One activity is designated as 'pretransfer' editing and involves the tRNA(Pro)-independent hydrolysis of activated Ala-AMP. The other activity is designated 'posttransfer' editing and involves deacylation of mischarged Ala-tRNA(Pro). The misacylated Cys-tRNA(Pro) is not edited by ProRS. The protein is Proline--tRNA ligase of Geobacter sp. (strain M21).